A 122-amino-acid polypeptide reads, in one-letter code: Large ribosomal subunit protein uL14 (122 aa).

The protein belongs to the universal ribosomal protein uL14 family. Part of the 50S ribosomal subunit. Forms a cluster with proteins L3 and L19. In the 70S ribosome, L14 and L19 interact and together make contacts with the 16S rRNA in bridges B5 and B8.

In terms of biological role, binds to 23S rRNA. Forms part of two intersubunit bridges in the 70S ribosome. This Hahella chejuensis (strain KCTC 2396) protein is Large ribosomal subunit protein uL14.